The chain runs to 169 residues: Regulator of ribonuclease activity A (169 aa).

Belongs to the RraA family. Homotrimer. Binds to both RNA-binding sites in the C-terminal region of Rne and to RhlB.

The protein localises to the cytoplasm. In terms of biological role, globally modulates RNA abundance by binding to RNase E (Rne) and regulating its endonucleolytic activity. Can modulate Rne action in a substrate-dependent manner by altering the composition of the degradosome. Modulates RNA-binding and helicase activities of the degradosome. The chain is Regulator of ribonuclease activity A from Photorhabdus laumondii subsp. laumondii (strain DSM 15139 / CIP 105565 / TT01) (Photorhabdus luminescens subsp. laumondii).